We begin with the raw amino-acid sequence, 97 residues long: Protein RESPONSE TO LOW SULFUR 3 (97 aa).

A coiled-coil region spans residues 8–42 (VTVAAEEVEELRRRNGELEREMEEMKKEMVQLWRR).

The sequence is that of Protein RESPONSE TO LOW SULFUR 3 from Arabidopsis thaliana (Mouse-ear cress).